The chain runs to 519 residues: tRNA pseudouridine synthase Pus10 (519 aa).

A disordered region spans residues 70 to 98 (NENEEIDENTKNNEDTENKADDKSQSNEE). Basic and acidic residues predominate over residues 77 to 98 (ENTKNNEDTENKADDKSQSNEE). Residues 144-265 (NESEENESNI…NQKIYLQINP (122 aa)) enclose the THUMP domain. Residue D334 is the Nucleophile of the active site. 2 residues coordinate substrate: Y398 and Y476.

This sequence belongs to the pseudouridine synthase Pus10 family.

The enzyme catalyses uridine(54) in tRNA = pseudouridine(54) in tRNA. The catalysed reaction is uridine(55) in tRNA = pseudouridine(55) in tRNA. Functionally, responsible for synthesis of pseudouridine from uracil-54 and uracil-55 in the psi GC loop of transfer RNAs. This is tRNA pseudouridine synthase Pus10 from Methanococcus voltae (strain ATCC BAA-1334 / A3).